Consider the following 100-residue polypeptide: NADH-quinone oxidoreductase subunit K (100 aa).

The next 3 helical transmembrane spans lie at Ile2–Val22, Leu29–Ile49, and Phe63–Leu83.

Belongs to the complex I subunit 4L family. In terms of assembly, NDH-1 is composed of 14 different subunits. Subunits NuoA, H, J, K, L, M, N constitute the membrane sector of the complex.

Its subcellular location is the cell inner membrane. It carries out the reaction a quinone + NADH + 5 H(+)(in) = a quinol + NAD(+) + 4 H(+)(out). NDH-1 shuttles electrons from NADH, via FMN and iron-sulfur (Fe-S) centers, to quinones in the respiratory chain. The immediate electron acceptor for the enzyme in this species is believed to be ubiquinone. Couples the redox reaction to proton translocation (for every two electrons transferred, four hydrogen ions are translocated across the cytoplasmic membrane), and thus conserves the redox energy in a proton gradient. This chain is NADH-quinone oxidoreductase subunit K, found in Sulfurovum sp. (strain NBC37-1).